We begin with the raw amino-acid sequence, 353 residues long: UPF0283 membrane protein YcjF (353 aa).

The next 3 helical transmembrane spans lie at 70–90 (MVMGGLALFGASVVGQGVQWT), 100–120 (VALGGCAAGALIIGAGVGSVV), and 213–233 (ESTLMIAVSPLALVDMAFIAW).

This sequence belongs to the UPF0283 family.

The protein localises to the cell inner membrane. This is UPF0283 membrane protein YcjF from Shigella sonnei (strain Ss046).